The primary structure comprises 156 residues: Cyanate hydratase (156 aa).

Residues R96, E99, and S122 contribute to the active site.

It belongs to the cyanase family.

It catalyses the reaction cyanate + hydrogencarbonate + 3 H(+) = NH4(+) + 2 CO2. In terms of biological role, catalyzes the reaction of cyanate with bicarbonate to produce ammonia and carbon dioxide. The protein is Cyanate hydratase of Burkholderia mallei (strain NCTC 10247).